Reading from the N-terminus, the 371-residue chain is RxLR effector protein PITG_12731 (371 aa).

Positions 1–24 (MRFYSVLLTIVTLIASTYDAKVNA) are cleaved as a signal peptide. Positions 43–53 (RMLRADHADER) match the RxLR-dEER motif.

Belongs to the RxLR effector family.

It localises to the secreted. Its subcellular location is the host nucleus. The protein resides in the host cytoplasm. In terms of biological role, effector that enhances P.infestans colonization of Nicotiana benthamiana leaves. In Phytophthora infestans (strain T30-4) (Potato late blight agent), this protein is RxLR effector protein PITG_12731.